We begin with the raw amino-acid sequence, 1447 residues long: Gag-Pol polyprotein (1447 aa).

The N-myristoyl glycine; by host moiety is linked to residue Gly2. The interaction with Gp41 stretch occupies residues Val7–Leu31. The interval Leu8–Arg43 is interaction with host CALM1. Residues Glu12–Ile19 are interaction with host AP3D1. The segment at Asp14 to His33 is interaction with membrane phosphatidylinositol 4,5-bisphosphate and RNA. The Nuclear export signal signature appears at Trp16 to Arg22. Positions Lys26–Lys32 match the Nuclear localization signal motif. The segment at Glu73–Ser77 is interaction with membrane phosphatidylinositol 4,5-bisphosphate. Residues Glu106–Val128 are disordered. Residue Tyr132 is modified to Phosphotyrosine; by host. Residues Asn189–Gln227 are interaction with human PPIA/CYPA and NUP153. Residues Tyr277–Leu363 form a dimerization/Multimerization of capsid protein p24 region. 2 CCHC-type zinc fingers span residues Val390–Ala407 and Lys411–Glu428. Positions Glu447–Gln476 are disordered. Over residues Ser450–Pro470 the composition is skewed to polar residues. Positions Pro501–Leu505 are dimerization of protease. One can recognise a Peptidase A2 domain in the interval Lys520 to Leu589. Asp525 (for protease activity; shared with dimeric partner) is an active-site residue. Dimerization of protease regions lie at residues Gly549–Lys555 and Asn588–Pro600. A Reverse transcriptase domain is found at Glu643–Leu833. Residues Asp709, Asp784, and Asp785 each contribute to the Mg(2+) site. The tract at residues Phe826–His834 is RT 'primer grip'. Residues Trp997–Trp1013 carry the Tryptophan repeat motif motif. Positions Ile1033–Arg1156 constitute an RNase H type-1 domain. Asp1042, Glu1077, Asp1097, and Asp1148 together coordinate Mg(2+). Residues Asp1162–Gln1203 form an Integrase-type zinc finger. Residues His1171, His1175, Cys1199, and Cys1202 each contribute to the Zn(2+) site. The Integrase catalytic domain occupies Val1213–Ile1363. Positions 1223, 1275, and 1311 each coordinate Mg(2+). The segment at residues Phe1382–Asp1429 is a DNA-binding region (integrase-type).

Homotrimer; further assembles as hexamers of trimers. Interacts with gp41 (via C-terminus). Interacts with host CALM1; this interaction induces a conformational change in the Matrix protein, triggering exposure of the myristate group. Interacts with host AP3D1; this interaction allows the polyprotein trafficking to multivesicular bodies during virus assembly. Part of the pre-integration complex (PIC) which is composed of viral genome, matrix protein, Vpr and integrase. In terms of assembly, homodimer; the homodimer further multimerizes as homohexamers or homopentamers. Interacts with human PPIA/CYPA; This interaction stabilizes the capsid. Interacts with human NUP153. Interacts with host PDZD8; this interaction stabilizes the capsid. Interacts with monkey TRIM5; this interaction destabilizes the capsid. As to quaternary structure, homodimer, whose active site consists of two apposed aspartic acid residues. Heterodimer of p66 RT and p51 RT (RT p66/p51). Heterodimerization of RT is essential for DNA polymerase activity. The overall folding of the subdomains is similar in p66 RT and p51 RT but the spatial arrangements of the subdomains are dramatically different. In terms of assembly, homotetramer; may further associate as a homohexadecamer. Part of the pre-integration complex (PIC) which is composed of viral genome, matrix protein, Vpr and integrase. Interacts with human SMARCB1/INI1 and human PSIP1/LEDGF isoform 1. Interacts with human KPNA3; this interaction might play a role in nuclear import of the pre-integration complex. Interacts with human NUP153; this interaction might play a role in nuclear import of the pre-integration complex. It depends on Mg(2+) as a cofactor. In terms of processing, specific enzymatic cleavages by the viral protease yield mature proteins. The protease is released by autocatalytic cleavage. The polyprotein is cleaved during and after budding, this process is termed maturation. Proteolytic cleavage of p66 RT removes the RNase H domain to yield the p51 RT subunit. Nucleocapsid protein p7 might be further cleaved after virus entry. Post-translationally, tyrosine phosphorylated presumably in the virion by a host kinase. Phosphorylation is apparently not a major regulator of membrane association. Phosphorylated possibly by host MAPK1; this phosphorylation is necessary for Pin1-mediated virion uncoating. In terms of processing, methylated by host PRMT6, impairing its function by reducing RNA annealing and the initiation of reverse transcription.

Its subcellular location is the host cell membrane. It localises to the host endosome. It is found in the host multivesicular body. The protein resides in the virion membrane. The protein localises to the host nucleus. Its subcellular location is the host cytoplasm. It localises to the virion. It carries out the reaction Specific for a P1 residue that is hydrophobic, and P1' variable, but often Pro.. The enzyme catalyses Endohydrolysis of RNA in RNA/DNA hybrids. Three different cleavage modes: 1. sequence-specific internal cleavage of RNA. Human immunodeficiency virus type 1 and Moloney murine leukemia virus enzymes prefer to cleave the RNA strand one nucleotide away from the RNA-DNA junction. 2. RNA 5'-end directed cleavage 13-19 nucleotides from the RNA end. 3. DNA 3'-end directed cleavage 15-20 nucleotides away from the primer terminus.. It catalyses the reaction 3'-end directed exonucleolytic cleavage of viral RNA-DNA hybrid.. The catalysed reaction is DNA(n) + a 2'-deoxyribonucleoside 5'-triphosphate = DNA(n+1) + diphosphate. With respect to regulation, the viral protease is inhibited by many synthetic protease inhibitors (PIs), such as amprenavir, atazanavir, indinavir, loprinavir, nelfinavir, ritonavir and saquinavir. RT can be inhibited either by nucleoside RT inhibitors (NRTIs) or by non nucleoside RT inhibitors (NNRTIs). NRTIs act as chain terminators, whereas NNRTIs inhibit DNA polymerization by binding a small hydrophobic pocket near the RT active site and inducing an allosteric change in this region. Classical NRTIs are abacavir, adefovir (PMEA), didanosine (ddI), lamivudine (3TC), stavudine (d4T), tenofovir (PMPA), zalcitabine (ddC), and zidovudine (AZT). Classical NNRTIs are atevirdine (BHAP U-87201E), delavirdine, efavirenz (DMP-266), emivirine (I-EBU), and nevirapine (BI-RG-587). The tritherapies used as a basic effective treatment of AIDS associate two NRTIs and one NNRTI. Use of protease inhibitors in tritherapy regimens permit more ambitious therapeutic strategies. Gag-Pol polyprotein and Gag polyprotein may regulate their own translation, by the binding genomic RNA in the 5'-UTR. At low concentration, Gag-Pol and Gag would promote translation, whereas at high concentration, the polyproteins encapsidate genomic RNA and then shut off translation. Functionally, matrix protein p17 targets Gag and Gag-pol polyproteins to the plasma membrane via a multipartite membrane-binding signal, that includes its myristoylated N-terminus. Matrix protein is part of the pre-integration complex. Implicated in the release from host cell mediated by Vpu. Binds to RNA. In terms of biological role, forms the conical core that encapsulates the genomic RNA-nucleocapsid complex in the virion. Most core are conical, with only 7% tubular. The core is constituted by capsid protein hexamer subunits. The core is disassembled soon after virion entry. Host restriction factors such as TRIM5-alpha or TRIMCyp bind retroviral capsids and cause premature capsid disassembly, leading to blocks in reverse transcription. Capsid restriction by TRIM5 is one of the factors which restricts HIV-1 to the human species. Host PIN1 apparently facilitates the virion uncoating. On the other hand, interactions with PDZD8 or CYPA stabilize the capsid. Its function is as follows. Nucleocapsid protein p7 encapsulates and protects viral dimeric unspliced genomic RNA (gRNA). Binds these RNAs through its zinc fingers. Acts as a nucleic acid chaperone which is involved in rearangement of nucleic acid secondary structure during gRNA retrotranscription. Also facilitates template switch leading to recombination. As part of the polyprotein, participates in gRNA dimerization, packaging, tRNA incorporation and virion assembly. The aspartyl protease mediates proteolytic cleavages of Gag and Gag-Pol polyproteins during or shortly after the release of the virion from the plasma membrane. Cleavages take place as an ordered, step-wise cascade to yield mature proteins. This process is called maturation. Displays maximal activity during the budding process just prior to particle release from the cell. Also cleaves Nef and Vif, probably concomitantly with viral structural proteins on maturation of virus particles. Hydrolyzes host EIF4GI and PABP1 in order to shut off the capped cellular mRNA translation. The resulting inhibition of cellular protein synthesis serves to ensure maximal viral gene expression and to evade host immune response. Also mediates cleavage of host YTHDF3. Mediates cleavage of host CARD8, thereby activating the CARD8 inflammasome, leading to the clearance of latent HIV-1 in patient CD4(+) T-cells after viral reactivation; in contrast, HIV-1 can evade CARD8-sensing when its protease remains inactive in infected cells prior to viral budding. Functionally, reverse transcriptase/ribonuclease H (RT) is a multifunctional enzyme that converts the viral RNA genome into dsDNA in the cytoplasm, shortly after virus entry into the cell. This enzyme displays a DNA polymerase activity that can copy either DNA or RNA templates, and a ribonuclease H (RNase H) activity that cleaves the RNA strand of RNA-DNA heteroduplexes in a partially processive 3' to 5' endonucleasic mode. Conversion of viral genomic RNA into dsDNA requires many steps. A tRNA(3)-Lys binds to the primer-binding site (PBS) situated at the 5'-end of the viral RNA. RT uses the 3' end of the tRNA primer to perform a short round of RNA-dependent minus-strand DNA synthesis. The reading proceeds through the U5 region and ends after the repeated (R) region which is present at both ends of viral RNA. The portion of the RNA-DNA heteroduplex is digested by the RNase H, resulting in a ssDNA product attached to the tRNA primer. This ssDNA/tRNA hybridizes with the identical R region situated at the 3' end of viral RNA. This template exchange, known as minus-strand DNA strong stop transfer, can be either intra- or intermolecular. RT uses the 3' end of this newly synthesized short ssDNA to perform the RNA-dependent minus-strand DNA synthesis of the whole template. RNase H digests the RNA template except for two polypurine tracts (PPTs) situated at the 5'-end and near the center of the genome. It is not clear if both polymerase and RNase H activities are simultaneous. RNase H probably can proceed both in a polymerase-dependent (RNA cut into small fragments by the same RT performing DNA synthesis) and a polymerase-independent mode (cleavage of remaining RNA fragments by free RTs). Secondly, RT performs DNA-directed plus-strand DNA synthesis using the PPTs that have not been removed by RNase H as primers. PPTs and tRNA primers are then removed by RNase H. The 3' and 5' ssDNA PBS regions hybridize to form a circular dsDNA intermediate. Strand displacement synthesis by RT to the PBS and PPT ends produces a blunt ended, linear dsDNA copy of the viral genome that includes long terminal repeats (LTRs) at both ends. In terms of biological role, catalyzes viral DNA integration into the host chromosome, by performing a series of DNA cutting and joining reactions. This enzyme activity takes place after virion entry into a cell and reverse transcription of the RNA genome in dsDNA. The first step in the integration process is 3' processing. This step requires a complex comprising the viral genome, matrix protein, Vpr and integrase. This complex is called the pre-integration complex (PIC). The integrase protein removes 2 nucleotides from each 3' end of the viral DNA, leaving recessed CA OH's at the 3' ends. In the second step, the PIC enters cell nucleus. This process is mediated through integrase and Vpr proteins, and allows the virus to infect a non dividing cell. This ability to enter the nucleus is specific of lentiviruses, other retroviruses cannot and rely on cell division to access cell chromosomes. In the third step, termed strand transfer, the integrase protein joins the previously processed 3' ends to the 5' ends of strands of target cellular DNA at the site of integration. The 5'-ends are produced by integrase-catalyzed staggered cuts, 5 bp apart. A Y-shaped, gapped, recombination intermediate results, with the 5'-ends of the viral DNA strands and the 3' ends of target DNA strands remaining unjoined, flanking a gap of 5 bp. The last step is viral DNA integration into host chromosome. This involves host DNA repair synthesis in which the 5 bp gaps between the unjoined strands are filled in and then ligated. Since this process occurs at both cuts flanking the HIV genome, a 5 bp duplication of host DNA is produced at the ends of HIV-1 integration. Alternatively, Integrase may catalyze the excision of viral DNA just after strand transfer, this is termed disintegration. The polypeptide is Gag-Pol polyprotein (gag-pol) (Homo sapiens (Human)).